The following is an 875-amino-acid chain: MTDSITDLQSDQRPDRSYDFASAERRWQLAWTERACFTVPDVPDPGARTYYVLEMFPYPSGQIHMGHVRNYTLGDVVARYKRAQGYQVLHPMGWDAFGLPAENAARERGVHPGQWTWNNIAAMRGELQRMGLSITWEREFATCDPSYYGHQQALFLDFLKKNLVERRESWVNWDPVDETVLANEQVIDGKGWRSGAPVERKKLSQWFLRITDYAEELLAGLDQLDRWPERVRVMQSRWIGRSEGARLRFPLVEPLGDQREIEVYTTRPDTLYGMSFVAIAADHPVAAALAAHHPALAAFVAECRSLGTSEAAIEAAEKRGFDTGLRVKHPFCDETFPVWIANFVLMDYGTGAVFGCPAHDQRDLDFARKYDLSVTPVVLPSDQDAASFTIGRKAYDGDGILFNSGPFDGLTPDAARREAITRLEAMGWGQGVTNWRLRDWGVSRQRYWGCPIPIIHCDQCGPVPVPADQLPVTLPEDVTFDRPGNPLDHHPSWKHVTCPSCGAAAVRETDTFDTFVDSSWYFARFASPHAHVPVLKEAAQNWLPVDQYIGGIEHAILHLLYARFFTRAMADTGHVPVREPFAGLFTQGMVTHESYRAADGRWLSPVEVTRHGETVVETATGEPVQVGRGEKMSKSKRNTVAPGEIFNRYGADAARWFILSDNPPERDMEWTDAGAVGAYRFVQRLYRLAEAVARIAKEETNRDDASSDAAMTLRRMTHRTVAAVTEALEGFNFNVAVARVYEFANALTEAEKKAAEPGMTAARVEAITLLSRIIAPMMPHLAEEMATLIEQGPKLVAEQVWPSADPALLVVQSVTIAIQVMGKLRATLDISPDADQDSVIAQAEADPNVVRALEGKRVVKRIYVPNRIVNFVIAG.

The 'HIGH' region signature appears at P57 to H67. The short motif at K631–S635 is the 'KMSKS' region element. K634 is a binding site for ATP.

Belongs to the class-I aminoacyl-tRNA synthetase family.

The protein localises to the cytoplasm. The catalysed reaction is tRNA(Leu) + L-leucine + ATP = L-leucyl-tRNA(Leu) + AMP + diphosphate. The polypeptide is Leucine--tRNA ligase (Granulibacter bethesdensis (strain ATCC BAA-1260 / CGDNIH1)).